A 722-amino-acid polypeptide reads, in one-letter code: Polyribonucleotide nucleotidyltransferase (722 aa).

Mg(2+) contacts are provided by Asp495 and Asp501. A KH domain is found at 562 to 621 (PRLLSFRIDPELIGTVIGPGGRTIKGITERTNTKIDIEDGGIVTIASHDGAAAEEAQRII). Residues 631 to 699 (GEIFPGSITR…NRGRINLTLR (69 aa)) enclose the S1 motif domain. Residues 700–722 (GVSQNGGMSNYPEPTPTPVAPLT) form a disordered region. Residues 712–722 (EPTPTPVAPLT) show a composition bias toward pro residues.

The protein belongs to the polyribonucleotide nucleotidyltransferase family. Mg(2+) is required as a cofactor.

The protein localises to the cytoplasm. It catalyses the reaction RNA(n+1) + phosphate = RNA(n) + a ribonucleoside 5'-diphosphate. Its function is as follows. Involved in mRNA degradation. Catalyzes the phosphorolysis of single-stranded polyribonucleotides processively in the 3'- to 5'-direction. In Prochlorococcus marinus (strain NATL2A), this protein is Polyribonucleotide nucleotidyltransferase.